The sequence spans 106 residues: uncharacterized protein (106 aa).

Positions 1–31 (MKKKTKIILSLLAALIVILIVLPVLSPVVFT) are cleaved as a signal peptide.

This is an uncharacterized protein from Bacillus subtilis (strain 168).